We begin with the raw amino-acid sequence, 242 residues long: Invasion chromosome antigen R (242 aa).

Its subcellular location is the secreted. Its function is as follows. May contribute to pathogenesis, although some of its characteristics suggest it is a fossil gene. The chain is Invasion chromosome antigen R from Shigella flexneri serotype 5a (strain M90T).